An 82-amino-acid polypeptide reads, in one-letter code: ATP synthase subunit c, chloroplastic (82 aa).

2 helical membrane-spanning segments follow: residues 7–27 and 57–77; these read AASV…PGIG and LAFM…LLFA.

It belongs to the ATPase C chain family. F-type ATPases have 2 components, F(1) - the catalytic core - and F(0) - the membrane proton channel. F(1) has five subunits: alpha(3), beta(3), gamma(1), delta(1), epsilon(1). F(0) has four main subunits: a(1), b(1), b'(1) and c(10-14). The alpha and beta chains form an alternating ring which encloses part of the gamma chain. F(1) is attached to F(0) by a central stalk formed by the gamma and epsilon chains, while a peripheral stalk is formed by the delta, b and b' chains.

The protein localises to the plastid. Its subcellular location is the chloroplast thylakoid membrane. Its function is as follows. F(1)F(0) ATP synthase produces ATP from ADP in the presence of a proton or sodium gradient. F-type ATPases consist of two structural domains, F(1) containing the extramembraneous catalytic core and F(0) containing the membrane proton channel, linked together by a central stalk and a peripheral stalk. During catalysis, ATP synthesis in the catalytic domain of F(1) is coupled via a rotary mechanism of the central stalk subunits to proton translocation. Functionally, key component of the F(0) channel; it plays a direct role in translocation across the membrane. A homomeric c-ring of between 10-14 subunits forms the central stalk rotor element with the F(1) delta and epsilon subunits. The polypeptide is ATP synthase subunit c, chloroplastic (Guillardia theta (Cryptophyte)).